The sequence spans 171 residues: MANPKNTASLEELKARFEQAQSTLLTEYRGLSVAETTELRRALGSDVTYSVAKNTMIKLAAREAGIELDESLLTGPTAIAFVNGEAVDAAKAMKDFGKDHKNFVIKGGYMDGATIDAAQVEAIAELDNRETTLAKLAGAMQGSLAKAAGLFNAPASQVARLAAALQEKKEQ.

It belongs to the universal ribosomal protein uL10 family. In terms of assembly, part of the ribosomal stalk of the 50S ribosomal subunit. The N-terminus interacts with L11 and the large rRNA to form the base of the stalk. The C-terminus forms an elongated spine to which L12 dimers bind in a sequential fashion forming a multimeric L10(L12)X complex.

In terms of biological role, forms part of the ribosomal stalk, playing a central role in the interaction of the ribosome with GTP-bound translation factors. This chain is Large ribosomal subunit protein uL10, found in Corynebacterium jeikeium (strain K411).